Reading from the N-terminus, the 145-residue chain is Fluoride-specific ion channel FluC 2 (145 aa).

The next 4 helical transmembrane spans lie at 16–36 (MLLV…LSAA), 42–62 (VISV…GWLL), 80–100 (LFAG…AVDT), and 113–133 (ILYA…GIAL). Glycine 88 and threonine 91 together coordinate Na(+).

It belongs to the fluoride channel Fluc/FEX (TC 1.A.43) family.

The protein resides in the cell membrane. The enzyme catalyses fluoride(in) = fluoride(out). With respect to regulation, na(+) is not transported, but it plays an essential structural role and its presence is essential for fluoride channel function. Functionally, fluoride-specific ion channel. Important for reducing fluoride concentration in the cell, thus reducing its toxicity. This chain is Fluoride-specific ion channel FluC 2, found in Leifsonia xyli subsp. xyli (strain CTCB07).